We begin with the raw amino-acid sequence, 149 residues long: 3-dehydroquinate dehydratase (149 aa).

Tyrosine 23 serves as the catalytic Proton acceptor. Substrate contacts are provided by asparagine 74, histidine 80, and aspartate 87. The active-site Proton donor is histidine 100. Substrate is bound by residues 101–102 (LS) and arginine 111.

This sequence belongs to the type-II 3-dehydroquinase family. As to quaternary structure, homododecamer.

It catalyses the reaction 3-dehydroquinate = 3-dehydroshikimate + H2O. Its pathway is metabolic intermediate biosynthesis; chorismate biosynthesis; chorismate from D-erythrose 4-phosphate and phosphoenolpyruvate: step 3/7. Its function is as follows. Catalyzes a trans-dehydration via an enolate intermediate. This chain is 3-dehydroquinate dehydratase, found in Ruegeria pomeroyi (strain ATCC 700808 / DSM 15171 / DSS-3) (Silicibacter pomeroyi).